Consider the following 89-residue polypeptide: Class I hydrophobin D (89 aa).

The first 16 residues, 1–16 (MKFSLATIALAAAVVA), serve as a signal peptide directing secretion. Cystine bridges form between Cys28–Cys68, Cys39–Cys60, Cys40–Cys52, and Cys69–Cys85. The N-linked (GlcNAc...) asparagine glycan is linked to Asn36.

It belongs to the fungal hydrophobin family.

Its subcellular location is the secreted. It is found in the cell wall. The protein resides in the vacuole. The protein localises to the cytoplasmic vesicle. Its function is as follows. Aerial growth, conidiation, and dispersal of filamentous fungi in the environment rely upon a capability of their secreting small amphipathic proteins called hydrophobins (HPBs) with low sequence identity. Class I can self-assemble into an outermost layer of rodlet bundles on aerial cell surfaces, conferring cellular hydrophobicity that supports fungal growth, development and dispersal; whereas Class II form highly ordered films at water-air interfaces through intermolecular interactions but contribute nothing to the rodlet structure. Hyd1D contributes to certain cell wall-related features, such as hydrophobicity but is not involved in cell wall-related events during fungal proliferation in host hemocoel. Does not contribute to conidial hydrophobicity. Involved in insect hemocoel colonization independent of cell hydrophobicity. The chain is Class I hydrophobin D from Beauveria bassiana (strain ARSEF 2860) (White muscardine disease fungus).